The primary structure comprises 73 residues: uncharacterized protein (73 aa).

Belongs to the asfivirus I73R family.

The protein localises to the virion. This is an uncharacterized protein from Ornithodoros (relapsing fever ticks).